Consider the following 130-residue polypeptide: UPF0102 protein SCO5602 (130 aa).

It belongs to the UPF0102 family.

The chain is UPF0102 protein SCO5602 from Streptomyces coelicolor (strain ATCC BAA-471 / A3(2) / M145).